We begin with the raw amino-acid sequence, 388 residues long: Large ribosomal subunit protein uL3A (388 aa).

Basic and acidic residues predominate over residues 1 to 10; sequence MSHCKFEQPR. The disordered stretch occupies residues 1–34; it reads MSHCKFEQPRHGSLGFLPRKRASRQRGKVKAFPK. Ser-13 bears the Phosphoserine mark. The span at 18–31 shows a compositional bias: basic residues; it reads PRKRASRQRGKVKA. Ser-65, Ser-140, Ser-143, Ser-207, Ser-295, and Ser-355 each carry phosphoserine. Thr-372 carries the post-translational modification Phosphothreonine.

The protein belongs to the universal ribosomal protein uL3 family. Component of the large ribosomal subunit (LSU). Mature yeast ribosomes consist of a small (40S) and a large (60S) subunit. The 40S small subunit contains 1 molecule of ribosomal RNA (18S rRNA) and at least 33 different proteins. The large 60S subunit contains 3 rRNA molecules (25S, 5.8S and 5S rRNA) and at least 46 different proteins. uL3 forms together with ES39L one of the contact sites for the signal recognition particle that targets ribosomes to the endoplasmic reticulum membrane.

It is found in the cytoplasm. In terms of biological role, component of the ribosome, a large ribonucleoprotein complex responsible for the synthesis of proteins in the cell. The small ribosomal subunit (SSU) binds messenger RNAs (mRNAs) and translates the encoded message by selecting cognate aminoacyl-transfer RNA (tRNA) molecules. The large subunit (LSU) contains the ribosomal catalytic site termed the peptidyl transferase center (PTC), which catalyzes the formation of peptide bonds, thereby polymerizing the amino acids delivered by tRNAs into a polypeptide chain. The nascent polypeptides leave the ribosome through a tunnel in the LSU and interact with protein factors that function in enzymatic processing, targeting, and the membrane insertion of nascent chains at the exit of the ribosomal tunnel. uL3 plays a role in coordinating processes of accommodating the aminoacyl-tRNA in the PTC. The sequence is that of Large ribosomal subunit protein uL3A (rpl301) from Schizosaccharomyces pombe (strain 972 / ATCC 24843) (Fission yeast).